A 603-amino-acid chain; its full sequence is Iron-sulfur clusters transporter ATM1, mitochondrial (603 aa).

The helical transmembrane segment at valine 20–phenylalanine 41 threads the bilayer. The ABC transmembrane type-1 domain occupies valine 20 to glutamine 310. The Mitochondrial intermembrane portion of the chain corresponds to arginine 42–glycine 64. A helical membrane pass occupies residues threonine 65–phenylalanine 88. Residues serine 89 to leucine 137 lie on the Mitochondrial matrix side of the membrane. The helical transmembrane segment at leucine 138–tyrosine 161 threads the bilayer. Residue glutamine 162 is a topological domain, mitochondrial intermembrane. A helical transmembrane segment spans residues phenylalanine 163 to isoleucine 183. Topologically, residues tryptophan 184–alanine 249 are mitochondrial matrix. Glutathione is bound by residues arginine 189–arginine 193 and asparagine 252–glutamine 255. The helical transmembrane segment at phenylalanine 250–tryptophan 268 threads the bilayer. At leucine 269 to aspartate 283 the chain is on the mitochondrial intermembrane side. A helical transmembrane segment spans residues leucine 284 to tyrosine 305. Glycine 302 contacts glutathione. Over arginine 306–lysine 603 the chain is Mitochondrial matrix. In terms of domain architecture, ABC transporter spans isoleucine 345 to alanine 581. ATP-binding positions include tyrosine 354 and glycine 378–arginine 389.

Belongs to the ABC transporter superfamily. ABCB family. Heavy Metal importer (TC 3.A.1.210) subfamily. As to quaternary structure, homodimer.

The protein resides in the mitochondrion inner membrane. Performs an essential function in the generation of cytoplasmic iron-sulfur proteins by mediating the ATP-dependent export of Fe/S cluster precursors synthesized by NFS1 and other mitochondrial proteins. Hydrolyzes ATP. Binds glutathione and may function by transporting a glutathione-conjugated iron-sulfur compound. This chain is Iron-sulfur clusters transporter ATM1, mitochondrial, found in Chaetomium globosum (strain ATCC 6205 / CBS 148.51 / DSM 1962 / NBRC 6347 / NRRL 1970) (Soil fungus).